Here is a 207-residue protein sequence, read N- to C-terminus: Ribosomal RNA small subunit methyltransferase G (207 aa).

Residues Gly76, Gln81, 127-128 (VE), and Arg141 contribute to the S-adenosyl-L-methionine site.

Belongs to the methyltransferase superfamily. RNA methyltransferase RsmG family.

The protein resides in the cytoplasm. It catalyses the reaction guanosine(527) in 16S rRNA + S-adenosyl-L-methionine = N(7)-methylguanosine(527) in 16S rRNA + S-adenosyl-L-homocysteine. Specifically methylates the N7 position of guanine in position 527 of 16S rRNA. The protein is Ribosomal RNA small subunit methyltransferase G of Neisseria meningitidis serogroup B (strain ATCC BAA-335 / MC58).